The following is a 256-amino-acid chain: Triosephosphate isomerase (256 aa).

12–14 (NWK) contacts substrate. His-99 acts as the Electrophile in catalysis. The Proton acceptor role is filled by Glu-169. Substrate contacts are provided by residues Gly-175, Ser-214, and 235–236 (GG).

This sequence belongs to the triosephosphate isomerase family. As to quaternary structure, homodimer.

It localises to the cytoplasm. It catalyses the reaction D-glyceraldehyde 3-phosphate = dihydroxyacetone phosphate. It participates in carbohydrate biosynthesis; gluconeogenesis. Its pathway is carbohydrate degradation; glycolysis; D-glyceraldehyde 3-phosphate from glycerone phosphate: step 1/1. Involved in the gluconeogenesis. Catalyzes stereospecifically the conversion of dihydroxyacetone phosphate (DHAP) to D-glyceraldehyde-3-phosphate (G3P). In Rhizobium etli (strain ATCC 51251 / DSM 11541 / JCM 21823 / NBRC 15573 / CFN 42), this protein is Triosephosphate isomerase.